Consider the following 214-residue polypeptide: uncharacterized protein (214 aa).

Positions 1–18 are cleaved as a signal peptide; the sequence is MTMYIGLILVVLATFCQG. N-linked (GlcNAc...) asparagine; by host glycosylation is present at N64.

This is an uncharacterized protein from Magallana gigas (Pacific oyster).